Consider the following 101-residue polypeptide: Small ribosomal subunit protein uS14 (101 aa).

It belongs to the universal ribosomal protein uS14 family. In terms of assembly, part of the 30S ribosomal subunit. Contacts proteins S3 and S10.

In terms of biological role, binds 16S rRNA, required for the assembly of 30S particles and may also be responsible for determining the conformation of the 16S rRNA at the A site. The sequence is that of Small ribosomal subunit protein uS14 from Shewanella denitrificans (strain OS217 / ATCC BAA-1090 / DSM 15013).